We begin with the raw amino-acid sequence, 285 residues long: HTH-type transcriptional regulator MurR (285 aa).

The HTH rpiR-type domain occupies 1 to 77 (MLYLTKIRNA…MALIGEYSAS (77 aa)). Residues 37 to 56 (SRKMAKQLGISQSSIVKFAQ) constitute a DNA-binding region (H-T-H motif). One can recognise an SIS domain in the interval 128-268 (IIEVISKAPF…FVGLVQLNDV (141 aa)).

Homotetramer.

Its pathway is amino-sugar metabolism; N-acetylmuramate degradation [regulation]. In terms of biological role, represses the expression of the murPQ operon involved in the uptake and degradation of N-acetylmuramic acid (MurNAc). Binds to two adjacent inverted repeats within the operator region. MurNAc 6-phosphate, the substrate of MurQ, is the specific inducer that weakens binding of MurR to the operator. The sequence is that of HTH-type transcriptional regulator MurR from Escherichia coli O157:H7.